A 739-amino-acid polypeptide reads, in one-letter code: NAD(P)H-quinone oxidoreductase subunit 5, chloroplastic (739 aa).

16 consecutive transmembrane segments (helical) span residues 9–29, 39–59, 89–109, 125–145, 147–167, 185–205, 224–244, 258–278, 280–300, 327–347, 354–374, 396–416, 425–445, 544–564, 603–623, and 719–739; these read WIIPFLPFPVTISIGLGLLLV, IWAFFSVLLLSIAMVFSADLA, IDPLTSIMLILITTVGIMVLI, FAYMSFFNTSMLGLVTSSNLI, IYIFWELVGMCSYLLIGFWFT, GDFGLLLGILGLYWITGSFEF, LFAALCASLLFVGAVAKSAQF, TPISALIHAATMVAAGIFLVA, LLPLFTVIPYIMNFISLIGII, LGYIMLAPGIGSYRAALFHLI, ALLFLGSGSIIHSMEPIVGYS, TTFFLGTLSLCGMPPLACFWS, WLYSPIFAIIAWSTAGLTAFY, LFPMLVLVLFTLFIGFIGIPF, IYSVTISFLGIFLAYIFYGSV, and YIFLYAFSVSICLIIYYFFSF.

It belongs to the complex I subunit 5 family. As to quaternary structure, NDH is composed of at least 16 different subunits, 5 of which are encoded in the nucleus.

Its subcellular location is the plastid. The protein resides in the chloroplast thylakoid membrane. The catalysed reaction is a plastoquinone + NADH + (n+1) H(+)(in) = a plastoquinol + NAD(+) + n H(+)(out). The enzyme catalyses a plastoquinone + NADPH + (n+1) H(+)(in) = a plastoquinol + NADP(+) + n H(+)(out). Functionally, NDH shuttles electrons from NAD(P)H:plastoquinone, via FMN and iron-sulfur (Fe-S) centers, to quinones in the photosynthetic chain and possibly in a chloroplast respiratory chain. The immediate electron acceptor for the enzyme in this species is believed to be plastoquinone. Couples the redox reaction to proton translocation, and thus conserves the redox energy in a proton gradient. The polypeptide is NAD(P)H-quinone oxidoreductase subunit 5, chloroplastic (ndhF) (Acorus calamus var. americanus (American sweet flag)).